The sequence spans 196 residues: Peptidyl-tRNA hydrolase (196 aa).

Tyr17 contacts tRNA. The active-site Proton acceptor is His22. TRNA-binding residues include Phe68, Asn70, and Asn116.

It belongs to the PTH family. As to quaternary structure, monomer.

The protein resides in the cytoplasm. The enzyme catalyses an N-acyl-L-alpha-aminoacyl-tRNA + H2O = an N-acyl-L-amino acid + a tRNA + H(+). In terms of biological role, hydrolyzes ribosome-free peptidyl-tRNAs (with 1 or more amino acids incorporated), which drop off the ribosome during protein synthesis, or as a result of ribosome stalling. Its function is as follows. Catalyzes the release of premature peptidyl moieties from peptidyl-tRNA molecules trapped in stalled 50S ribosomal subunits, and thus maintains levels of free tRNAs and 50S ribosomes. The chain is Peptidyl-tRNA hydrolase from Serratia proteamaculans (strain 568).